A 269-amino-acid chain; its full sequence is Shikimate dehydrogenase (NADP(+)) (269 aa).

Shikimate contacts are provided by residues 14–16 (SVS) and Thr-61. Catalysis depends on Lys-65, which acts as the Proton acceptor. Asn-85 and Asp-98 together coordinate shikimate. Residues 120 to 124 (GAGGA), 143 to 148 (NRTEEK), and Thr-211 each bind NADP(+). Tyr-213 contacts shikimate. Gly-234 is an NADP(+) binding site.

Belongs to the shikimate dehydrogenase family. In terms of assembly, homodimer.

It carries out the reaction shikimate + NADP(+) = 3-dehydroshikimate + NADPH + H(+). The protein operates within metabolic intermediate biosynthesis; chorismate biosynthesis; chorismate from D-erythrose 4-phosphate and phosphoenolpyruvate: step 4/7. In terms of biological role, involved in the biosynthesis of the chorismate, which leads to the biosynthesis of aromatic amino acids. Catalyzes the reversible NADPH linked reduction of 3-dehydroshikimate (DHSA) to yield shikimate (SA). The protein is Shikimate dehydrogenase (NADP(+)) of Archaeoglobus fulgidus (strain ATCC 49558 / DSM 4304 / JCM 9628 / NBRC 100126 / VC-16).